The following is a 317-amino-acid chain: Acetyl-coenzyme A carboxylase carboxyl transferase subunit alpha (317 aa).

The CoA carboxyltransferase C-terminal domain maps to 43–293 (RVRESMADIY…GDVISNALGE (251 aa)).

It belongs to the AccA family. Acetyl-CoA carboxylase is a heterohexamer composed of biotin carboxyl carrier protein (AccB), biotin carboxylase (AccC) and two subunits each of ACCase subunit alpha (AccA) and ACCase subunit beta (AccD).

The protein localises to the cytoplasm. The catalysed reaction is N(6)-carboxybiotinyl-L-lysyl-[protein] + acetyl-CoA = N(6)-biotinyl-L-lysyl-[protein] + malonyl-CoA. The protein operates within lipid metabolism; malonyl-CoA biosynthesis; malonyl-CoA from acetyl-CoA: step 1/1. Its function is as follows. Component of the acetyl coenzyme A carboxylase (ACC) complex. First, biotin carboxylase catalyzes the carboxylation of biotin on its carrier protein (BCCP) and then the CO(2) group is transferred by the carboxyltransferase to acetyl-CoA to form malonyl-CoA. The protein is Acetyl-coenzyme A carboxylase carboxyl transferase subunit alpha of Rhizobium rhizogenes (strain K84 / ATCC BAA-868) (Agrobacterium radiobacter).